The following is a 258-amino-acid chain: Na(+)-translocating NADH-quinone reductase subunit C (258 aa).

Residues 14 to 34 (LIVVLAVSLICSVIVAGAVVG) traverse the membrane as a helical segment. Residue Ser226 is modified to FMN phosphoryl serine.

This sequence belongs to the NqrC family. Composed of six subunits; NqrA, NqrB, NqrC, NqrD, NqrE and NqrF. FMN is required as a cofactor.

It is found in the cell inner membrane. The enzyme catalyses a ubiquinone + n Na(+)(in) + NADH + H(+) = a ubiquinol + n Na(+)(out) + NAD(+). Functionally, NQR complex catalyzes the reduction of ubiquinone-1 to ubiquinol by two successive reactions, coupled with the transport of Na(+) ions from the cytoplasm to the periplasm. NqrA to NqrE are probably involved in the second step, the conversion of ubisemiquinone to ubiquinol. In Neisseria meningitidis serogroup B (strain ATCC BAA-335 / MC58), this protein is Na(+)-translocating NADH-quinone reductase subunit C.